The following is a 297-amino-acid chain: UDP-3-O-acyl-N-acetylglucosamine deacetylase (297 aa).

Zn(2+) is bound by residues His-79, His-238, and Asp-242. Catalysis depends on His-265, which acts as the Proton donor.

It belongs to the LpxC family. The cofactor is Zn(2+).

It carries out the reaction a UDP-3-O-[(3R)-3-hydroxyacyl]-N-acetyl-alpha-D-glucosamine + H2O = a UDP-3-O-[(3R)-3-hydroxyacyl]-alpha-D-glucosamine + acetate. It participates in glycolipid biosynthesis; lipid IV(A) biosynthesis; lipid IV(A) from (3R)-3-hydroxytetradecanoyl-[acyl-carrier-protein] and UDP-N-acetyl-alpha-D-glucosamine: step 2/6. Functionally, catalyzes the hydrolysis of UDP-3-O-myristoyl-N-acetylglucosamine to form UDP-3-O-myristoylglucosamine and acetate, the committed step in lipid A biosynthesis. This chain is UDP-3-O-acyl-N-acetylglucosamine deacetylase, found in Blochmanniella pennsylvanica (strain BPEN).